The chain runs to 352 residues: Uroporphyrinogen decarboxylase (352 aa).

Substrate-binding positions include 27-31 (RQAGR), Asp77, Tyr154, Thr209, and His325.

The protein belongs to the uroporphyrinogen decarboxylase family. As to quaternary structure, homodimer.

The protein resides in the cytoplasm. The enzyme catalyses uroporphyrinogen III + 4 H(+) = coproporphyrinogen III + 4 CO2. It functions in the pathway porphyrin-containing compound metabolism; protoporphyrin-IX biosynthesis; coproporphyrinogen-III from 5-aminolevulinate: step 4/4. Catalyzes the decarboxylation of four acetate groups of uroporphyrinogen-III to yield coproporphyrinogen-III. This is Uroporphyrinogen decarboxylase from Legionella pneumophila (strain Corby).